Reading from the N-terminus, the 444-residue chain is Transposase for insertion sequence element IS1557 (444 aa).

A disordered region spans residues P273–R292.

Belongs to the transposase 12 family.

The sequence is that of Transposase for insertion sequence element IS1557 from Mycobacterium tuberculosis (strain CDC 1551 / Oshkosh).